A 1528-amino-acid polypeptide reads, in one-letter code: 5'-3' exoribonuclease 1 (1528 aa).

Disordered regions lie at residues 1246 to 1331 (SKKA…KSSE), 1431 to 1455 (PPPA…NVSD), and 1470 to 1528 (LKKF…DEST). Basic and acidic residues predominate over residues 1274–1304 (QSEEKLRKERAHDLLNFIKKDTNEKNSESVD). Positions 1317-1326 (AKKVLLKRPA) are enriched in basic residues. Residues 1500-1517 (SSGTNSTECQSPKSQSNA) are compositionally biased toward polar residues. Thr1506 bears the Phosphothreonine mark. At Ser1510 the chain carries Phosphoserine. A compositionally biased stretch (basic and acidic residues) spans 1518–1528 (ADRDNKKDEST).

Belongs to the 5'-3' exonuclease family. Mg(2+) serves as cofactor.

Its subcellular location is the cytoplasm. The protein localises to the perinuclear region. The protein resides in the P-body. Its activity is regulated as follows. 3'-phosphoadenosine 5'-phosphate (pAp) is an inhibitor of KEM1. Sodium-induced GCN4 expression reduces pAp accumulation by activating HAL2 expression, and therefore maintains mRNA degradation capacity which is likely to be important for the accurate and rapid adaptation of gene expression to salt stress. In terms of biological role, multifunctional protein that exhibits several independent functions at different levels of the cellular processes. 5'-3' exonuclease component of the nonsense-mediated mRNA decay (NMD) which is a highly conserved mRNA degradation pathway, an RNA surveillance system whose role is to identify and rid cells of mRNA with premature termination codons and thus prevents accumulation of potentially harmful truncated proteins. The NMD pathway has a second role regulating the decay of wild-type mRNAs, and especially mRNAs that are important for telomere functions. Participate in CTH2-mediated and VTS1-mediated mRNA turnover. Involved in the degradation of several hypomodified mature tRNA species and participates in the 5'-processing or the degradation of the snoRNA precursors and rRNA processing. Involved in defense against virus and suppresses viral RNA recombination by rapidly removing the 5'-truncated RNAs, the substrates of recombination, and thus reducing the chance for recombination to occur in the parental strain. Required for the assembly of the virus-like particles of the Ty3 retrotransposon and contributes to the efficient generation of narnavirus 20S RNA by playing a major role in the elimination of the non-viral upstream sequences from the primary transcripts. Degrades single-stranded DNA (ss-DNA) and can renature complementary ss-DNA as well as catalyzes the formation of heteroduplex DNA from circular ss-DNA and homologous linear ds-DNA in vitro. Acts as a microtubule-associated protein which interacts with cytoplasmic microtubules through beta-tubulin and promotes in vitro assembly of tubulin into microtubules. Associates with microtubule functions such as chromosome transmission, nuclear migration, and SPB duplication. Has also a role in G1 to S transition and is involved in nuclear fusion during karyogamy. Required for the expression of ROK1 at the post-transcriptional level and for the alpha-factor induction of the karyogamy genes KAR3 and KAR4. Plays a role in filamentous growth. The polypeptide is 5'-3' exoribonuclease 1 (XRN1) (Saccharomyces cerevisiae (strain ATCC 204508 / S288c) (Baker's yeast)).